The chain runs to 198 residues: Recombination protein RecR (198 aa).

A C4-type zinc finger spans residues 58–73 (CKVCQTLTDKEICPIC). One can recognise a Toprim domain in the interval 81–175 (KVIMVVENTR…KVSRIASGVP (95 aa)).

Belongs to the RecR family.

Its function is as follows. May play a role in DNA repair. It seems to be involved in an RecBC-independent recombinational process of DNA repair. It may act with RecF and RecO. The polypeptide is Recombination protein RecR (Lachnoclostridium phytofermentans (strain ATCC 700394 / DSM 18823 / ISDg) (Clostridium phytofermentans)).